Here is a 223-residue protein sequence, read N- to C-terminus: 7-cyano-7-deazaguanine synthase (223 aa).

12 to 22 (FSGGQDSTTCL) lines the ATP pocket. Zn(2+) is bound by residues Cys189, Cys198, Cys201, and Cys204.

It belongs to the QueC family. In terms of assembly, homodimer. Zn(2+) serves as cofactor.

It carries out the reaction 7-carboxy-7-deazaguanine + NH4(+) + ATP = 7-cyano-7-deazaguanine + ADP + phosphate + H2O + H(+). The protein operates within purine metabolism; 7-cyano-7-deazaguanine biosynthesis. Catalyzes the ATP-dependent conversion of 7-carboxy-7-deazaguanine (CDG) to 7-cyano-7-deazaguanine (preQ(0)). The polypeptide is 7-cyano-7-deazaguanine synthase (Halalkalibacterium halodurans (strain ATCC BAA-125 / DSM 18197 / FERM 7344 / JCM 9153 / C-125) (Bacillus halodurans)).